We begin with the raw amino-acid sequence, 265 residues long: Type III pantothenate kinase (265 aa).

ATP is bound at residue 6–13 (DVGNTHTV). Position 112 to 115 (112 to 115 (GADR)) interacts with substrate. Catalysis depends on Asp-114, which acts as the Proton acceptor. Residue Asp-134 participates in K(+) binding. Thr-137 serves as a coordination point for ATP. Thr-189 lines the substrate pocket.

The protein belongs to the type III pantothenate kinase family. Homodimer. The cofactor is NH4(+). K(+) serves as cofactor.

The protein resides in the cytoplasm. It carries out the reaction (R)-pantothenate + ATP = (R)-4'-phosphopantothenate + ADP + H(+). It participates in cofactor biosynthesis; coenzyme A biosynthesis; CoA from (R)-pantothenate: step 1/5. In terms of biological role, catalyzes the phosphorylation of pantothenate (Pan), the first step in CoA biosynthesis. The chain is Type III pantothenate kinase from Streptomyces coelicolor (strain ATCC BAA-471 / A3(2) / M145).